A 204-amino-acid polypeptide reads, in one-letter code: Small ribosomal subunit protein uS4 (204 aa).

Positions 92–157 (RRLDALVLRS…KPLFEVAREG (66 aa)) constitute an S4 RNA-binding domain.

It belongs to the universal ribosomal protein uS4 family. In terms of assembly, part of the 30S ribosomal subunit. Contacts protein S5. The interaction surface between S4 and S5 is involved in control of translational fidelity.

One of the primary rRNA binding proteins, it binds directly to 16S rRNA where it nucleates assembly of the body of the 30S subunit. Its function is as follows. With S5 and S12 plays an important role in translational accuracy. The sequence is that of Small ribosomal subunit protein uS4 from Streptomyces avermitilis (strain ATCC 31267 / DSM 46492 / JCM 5070 / NBRC 14893 / NCIMB 12804 / NRRL 8165 / MA-4680).